The chain runs to 235 residues: Meiotically up-regulated gene 123 protein (235 aa).

Positions 1–14 are enriched in basic and acidic residues; that stretch reads MERLATRSSHDDPY. Disordered stretches follow at residues 1–34, 58–83, and 169–235; these read MERL…SNGS, PLHS…GGMR, and SRAD…FDSD. Residues 15–34 show a composition bias toward polar residues; that stretch reads SRSSLPTSNAINSNHESNGS. Low complexity predominate over residues 61–77; the sequence is SSPSIKSSSQNGKSSSK. Residues 176–202 show a composition bias toward polar residues; the sequence is ETTQSDGFESRSGSPTHDIQSYLVNRR. Residues Ser-180, Ser-187, and Ser-189 each carry the phosphoserine modification. At Thr-191 the chain carries Phosphothreonine.

The protein resides in the cytoplasm. Its subcellular location is the nucleus. Its function is as follows. Involved in sporulation and has a role in meiosis. The polypeptide is Meiotically up-regulated gene 123 protein (mug123) (Schizosaccharomyces pombe (strain 972 / ATCC 24843) (Fission yeast)).